A 329-amino-acid polypeptide reads, in one-letter code: GTP 3',8-cyclase (329 aa).

A Radical SAM core domain is found at 1 to 229 (MNQVDYLRIS…EGYVRGNGPA (229 aa)). Residue Arg8 coordinates GTP. [4Fe-4S] cluster is bound by residues Cys15 and Cys19. Tyr21 contacts S-adenosyl-L-methionine. [4Fe-4S] cluster is bound at residue Cys22. Arg60 serves as a coordination point for GTP. Residue Gly64 coordinates S-adenosyl-L-methionine. Thr91 serves as a coordination point for GTP. Ser115 contacts S-adenosyl-L-methionine. GTP is bound at residue Lys155. Met189 serves as a coordination point for S-adenosyl-L-methionine. The [4Fe-4S] cluster site is built by Cys252 and Cys255. 257 to 259 (RVR) contacts GTP. Residue Cys269 participates in [4Fe-4S] cluster binding.

It belongs to the radical SAM superfamily. MoaA family. In terms of assembly, monomer and homodimer. Requires [4Fe-4S] cluster as cofactor.

It catalyses the reaction GTP + AH2 + S-adenosyl-L-methionine = (8S)-3',8-cyclo-7,8-dihydroguanosine 5'-triphosphate + 5'-deoxyadenosine + L-methionine + A + H(+). It functions in the pathway cofactor biosynthesis; molybdopterin biosynthesis. Catalyzes the cyclization of GTP to (8S)-3',8-cyclo-7,8-dihydroguanosine 5'-triphosphate. The polypeptide is GTP 3',8-cyclase (Cyanothece sp. (strain PCC 7425 / ATCC 29141)).